We begin with the raw amino-acid sequence, 264 residues long: Glutamate racemase (264 aa).

Substrate is bound by residues 10 to 11 and 42 to 43; these read DS and YG. Residue Cys73 is the Proton donor/acceptor of the active site. 74-75 is a substrate binding site; sequence NT. Cys183 acts as the Proton donor/acceptor in catalysis. Position 184 to 185 (184 to 185) interacts with substrate; sequence TH.

The protein belongs to the aspartate/glutamate racemases family.

The catalysed reaction is L-glutamate = D-glutamate. It functions in the pathway cell wall biogenesis; peptidoglycan biosynthesis. In terms of biological role, provides the (R)-glutamate required for cell wall biosynthesis. The sequence is that of Glutamate racemase from Streptococcus mutans serotype c (strain ATCC 700610 / UA159).